Consider the following 223-residue polypeptide: MIPQTLEQLLSQAQSIAGLTFGELADELHIPVPPDLKRDKGWVGMLLERALGATAGSKAEQDFSHLGVELKTLPINAEGYPLETTFVSLAPLVQNSGVKWENSHVRHKLSCVLWMPIEGSRHIPLRERHIGAPIFWKPTAEQERQLKQDWEELMDLIVLGKLDQITARIGEVMQLRPKGANSKAITKGIGKNGEVIDTLPLGFYLRKEFTAQILNAFLETKPL.

It belongs to the MutH family.

Its subcellular location is the cytoplasm. Sequence-specific endonuclease that cleaves unmethylated GATC sequences. It is involved in DNA mismatch repair. The protein is DNA mismatch repair protein MutH of Haemophilus influenzae (strain PittEE).